The primary structure comprises 236 residues: Uridylate kinase (236 aa).

ATP is bound at residue 8-11 (KLSG). Residues 16 to 21 (GEQGYG) are involved in allosteric activation by GTP. The ATP site is built by Gly51 and Arg55. Residues Asp70 and 131-138 (TGNPYFST) each bind UMP. Residues Asn159, Tyr165, and Asp168 each coordinate ATP.

The protein belongs to the UMP kinase family. As to quaternary structure, homohexamer.

The protein resides in the cytoplasm. The catalysed reaction is UMP + ATP = UDP + ADP. Its pathway is pyrimidine metabolism; CTP biosynthesis via de novo pathway; UDP from UMP (UMPK route): step 1/1. Allosterically activated by GTP. Inhibited by UTP. Catalyzes the reversible phosphorylation of UMP to UDP. The sequence is that of Uridylate kinase from Shouchella clausii (strain KSM-K16) (Alkalihalobacillus clausii).